A 328-amino-acid polypeptide reads, in one-letter code: MKALVRVAVTGAAGQIGYSLLFRIAAGEMFGKDRPVILQMLELPDEKAQAALKGVMMELEDCAFPLLAGMVVTDNPDIAFKDADAALLVGSRPRGPGMERKDLLMENAKIFTAQGAALNKVARRDVKVLVVGNPANTNAYIAMKSAPDLNPKHFTAMLRLDHNRALSQLSTKLGKPVANIEKLIVWGNHSPTMYPDYRFATADGTPIIEAINDQAWNANSFIPTVSKRGAAIIEARGLSSAASAANAAIDHMRDWLLGSNGKWITMGVPSDGSYGIPEGMIFGFPVTTTNGEYSIVKDLPIDTFSKTYIDKTLAELEEERASITHLLR.

11–17 (GAAGQIG) is an NAD(+) binding site. Substrate contacts are provided by arginine 94 and arginine 100. NAD(+)-binding positions include asparagine 107, glutamine 114, and 131-133 (VGN). Residues asparagine 133 and arginine 164 each coordinate substrate. Histidine 189 functions as the Proton acceptor in the catalytic mechanism.

The protein belongs to the LDH/MDH superfamily. MDH type 2 family.

The enzyme catalyses (S)-malate + NAD(+) = oxaloacetate + NADH + H(+). Its function is as follows. Catalyzes the reversible oxidation of malate to oxaloacetate. The chain is Malate dehydrogenase from Xylella fastidiosa (strain Temecula1 / ATCC 700964).